A 500-amino-acid polypeptide reads, in one-letter code: Phenylalanine--tRNA ligase alpha subunit (500 aa).

L-phenylalanine is bound by residues threonine 343, 382–384, and phenylalanine 423; that span reads QVD. Mg(2+) is bound at residue glutamate 425. Phenylalanine 448 contacts L-phenylalanine.

It belongs to the class-II aminoacyl-tRNA synthetase family. Phe-tRNA synthetase alpha subunit type 2 subfamily. In terms of assembly, tetramer of two alpha and two beta subunits. Mg(2+) serves as cofactor.

It localises to the cytoplasm. The catalysed reaction is tRNA(Phe) + L-phenylalanine + ATP = L-phenylalanyl-tRNA(Phe) + AMP + diphosphate + H(+). In Thermococcus onnurineus (strain NA1), this protein is Phenylalanine--tRNA ligase alpha subunit.